Here is a 543-residue protein sequence, read N- to C-terminus: Chaperonin GroEL (543 aa).

Residues 29-32 (TVGP), 86-90 (DGTTT), glycine 413, and aspartate 504 each bind ATP.

This sequence belongs to the chaperonin (HSP60) family. Forms a cylinder of 14 subunits composed of two heptameric rings stacked back-to-back. Interacts with the co-chaperonin GroES.

The protein localises to the cytoplasm. It catalyses the reaction ATP + H2O + a folded polypeptide = ADP + phosphate + an unfolded polypeptide.. Functionally, together with its co-chaperonin GroES, plays an essential role in assisting protein folding. The GroEL-GroES system forms a nano-cage that allows encapsulation of the non-native substrate proteins and provides a physical environment optimized to promote and accelerate protein folding. The protein is Chaperonin GroEL of Mycoplasma genitalium (strain ATCC 33530 / DSM 19775 / NCTC 10195 / G37) (Mycoplasmoides genitalium).